The sequence spans 159 residues: Ribosomal RNA large subunit methyltransferase H (159 aa).

S-adenosyl-L-methionine contacts are provided by residues L76, G108, and 127–132; that span reads FSPMTF.

The protein belongs to the RNA methyltransferase RlmH family. As to quaternary structure, homodimer.

It localises to the cytoplasm. It carries out the reaction pseudouridine(1915) in 23S rRNA + S-adenosyl-L-methionine = N(3)-methylpseudouridine(1915) in 23S rRNA + S-adenosyl-L-homocysteine + H(+). Functionally, specifically methylates the pseudouridine at position 1915 (m3Psi1915) in 23S rRNA. The chain is Ribosomal RNA large subunit methyltransferase H from Alkaliphilus oremlandii (strain OhILAs) (Clostridium oremlandii (strain OhILAs)).